A 499-amino-acid polypeptide reads, in one-letter code: Lysine--tRNA ligase (499 aa).

Positions 408 and 415 each coordinate Mg(2+).

It belongs to the class-II aminoacyl-tRNA synthetase family. As to quaternary structure, homodimer. Mg(2+) is required as a cofactor.

Its subcellular location is the cytoplasm. It carries out the reaction tRNA(Lys) + L-lysine + ATP = L-lysyl-tRNA(Lys) + AMP + diphosphate. This chain is Lysine--tRNA ligase, found in Bacillus cereus (strain B4264).